Here is a 113-residue protein sequence, read N- to C-terminus: U11-theraphotoxin-Hhn1j (113 aa).

A signal peptide spans 1-21 (MNTVRVTFLLVFVLAVSLGQA). Residues 22 to 74 (DKDENRMEMQEKTEQGKSYLDFAENLLLQKLEELEAKLLEEDSEESRNSRQKR) constitute a propeptide that is removed on maturation. The segment covering 60-69 (LEEDSEESRN) has biased composition (basic and acidic residues). The tract at residues 60–83 (LEEDSEESRNSRQKRCIGEGVPCD) is disordered. 3 disulfides stabilise this stretch: cysteine 75/cysteine 90, cysteine 82/cysteine 95, and cysteine 89/cysteine 110.

The protein belongs to the neurotoxin 14 (magi-1) family. 01 (HNTX-16) subfamily. Expressed by the venom gland.

Its subcellular location is the secreted. Functionally, probable ion channel inhibitor. In Cyriopagopus hainanus (Chinese bird spider), this protein is U11-theraphotoxin-Hhn1j.